A 211-amino-acid chain; its full sequence is Peptide methionine sulfoxide reductase MsrA (211 aa).

The active site involves Cys-60.

It belongs to the MsrA Met sulfoxide reductase family.

The catalysed reaction is L-methionyl-[protein] + [thioredoxin]-disulfide + H2O = L-methionyl-(S)-S-oxide-[protein] + [thioredoxin]-dithiol. The enzyme catalyses [thioredoxin]-disulfide + L-methionine + H2O = L-methionine (S)-S-oxide + [thioredoxin]-dithiol. Its function is as follows. Has an important function as a repair enzyme for proteins that have been inactivated by oxidation. Catalyzes the reversible oxidation-reduction of methionine sulfoxide in proteins to methionine. The polypeptide is Peptide methionine sulfoxide reductase MsrA (Methanosarcina mazei (strain ATCC BAA-159 / DSM 3647 / Goe1 / Go1 / JCM 11833 / OCM 88) (Methanosarcina frisia)).